The chain runs to 325 residues: UPF0164 protein TP_0856 (325 aa).

Residues 1–28 (MVHYKSVFYKSAALVCGFVLAGASVAIA) form the signal peptide.

It belongs to the UPF0164 family.

The protein is UPF0164 protein TP_0856 of Treponema pallidum (strain Nichols).